Here is a 246-residue protein sequence, read N- to C-terminus: Phosphomannomutase 2 (246 aa).

The residue at position 2 (Ala2) is an N-acetylalanine. The active-site Nucleophile is the Asp12. 2 residues coordinate Mg(2+): Asp12 and Asp14. Residue Asp14 is the Proton donor/acceptor of the active site. Residues Arg21, Arg123, Arg134, Arg141, Ser179, and Asp181 each contribute to the alpha-D-mannose 1-phosphate site. Mg(2+)-binding residues include Asp209, Phe221, Asp223, and Thr226.

It belongs to the eukaryotic PMM family. Homodimer.

Its subcellular location is the cytoplasm. The catalysed reaction is alpha-D-mannose 1-phosphate = D-mannose 6-phosphate. Its pathway is nucleotide-sugar biosynthesis; GDP-alpha-D-mannose biosynthesis; alpha-D-mannose 1-phosphate from D-fructose 6-phosphate: step 2/2. Functionally, involved in the synthesis of the GDP-mannose and dolichol-phosphate-mannose required for a number of critical mannosyl transfer reactions. The chain is Phosphomannomutase 2 (PMM2) from Bos taurus (Bovine).